The sequence spans 1521 residues: Protein OPAQUE1 (1521 aa).

The Myosin N-terminal SH3-like domain maps to 4-53; it reads RKGLKVWVEEKGEGWVEAEVVEAKERAVVVFSSQRKKITVSPEKLLPRDT. Positions 60 to 731 constitute a Myosin motor domain; it reads GHVDDMTKLT…QIAILDMRRA (672 aa). Residues 155-162 and 208-216 contribute to the ATP site; these read GESGAGKT and NDNSSRFGK. 4 actin-binding regions span residues 493–527, 529–552, 587–612, and 612–634; these read LIEKKPIGIIALLDEACMFPKSTHETFATKMFRNF, SHLRLERTKFSETDFTISHYAGKV, FTSLPEESIRSSYKFSSVASRFKLQL, and LQALMETLNSTEPHYVRCVKPNS. IQ domains are found at residues 733–755, 756–778, 781–803, 804–826, 829–851, and 852–874; these read ILDNAARHIQGRFRTFITRKEFV, KTREASISIQAYCRGCLARKMFA, RETAAAVIVQKYVRRWLLRRAHL, QACLAALLIQSYIRGFIARRYFS, REHKAATVIQSTWRRRKFVILFQ, and NYRQATVAIQCSWRQKLARKELR. 2 coiled-coil regions span residues 870–910 and 974–1050; these read RKEL…ERRL and SAEA…LRQK. Positions 1162 to 1459 constitute a Dilute domain; that stretch reads DHVIEAINDV…VAAMREMVNK (298 aa).

It belongs to the TRAFAC class myosin-kinesin ATPase superfamily. Myosin family. Plant myosin class XI subfamily. In terms of assembly, interacts (via C-terminus) with HIP (via C-terminus), but not with zeins, FL1 or intrinsic proteins of protein bodies. In terms of tissue distribution, high expression in kernels and stems, intermediate in ears and leaves, and low in roots, silks and tassels.

Its subcellular location is the cytoplasm. Myosin XI motor protein required for endoplasmic reticulum motility and protein body formation. May function by binding with its tail domain to receptor proteins on membranes and exerting force with its N-terminal motor domain against actin filaments, thereby transporting its cargo along polarized actin cables. This is Protein OPAQUE1 from Zea mays (Maize).